Here is a 635-residue protein sequence, read N- to C-terminus: Threonine--tRNA ligase (635 aa).

Positions 1–152 are editing domain; the sequence is MQLLLIHSDY…AKAAVKPEAA (152 aa). The catalytic stretch occupies residues 215-514; the sequence is PHVELMRRLE…TEEGKVPMLP (300 aa). 3 residues coordinate Zn(2+): cysteine 307, histidine 359, and histidine 483.

This sequence belongs to the class-II aminoacyl-tRNA synthetase family. In terms of assembly, homodimer. Requires Zn(2+) as cofactor.

It is found in the cytoplasm. It carries out the reaction tRNA(Thr) + L-threonine + ATP = L-threonyl-tRNA(Thr) + AMP + diphosphate + H(+). In terms of biological role, catalyzes the attachment of threonine to tRNA(Thr) in a two-step reaction: L-threonine is first activated by ATP to form Thr-AMP and then transferred to the acceptor end of tRNA(Thr). Also edits incorrectly charged L-seryl-tRNA(Thr). This Methanosarcina acetivorans (strain ATCC 35395 / DSM 2834 / JCM 12185 / C2A) protein is Threonine--tRNA ligase.